A 404-amino-acid chain; its full sequence is Phosphoglycerate kinase (404 aa).

Substrate is bound by residues 22 to 24 (DLN), R37, 60 to 63 (HLGR), R119, and R156. ATP is bound by residues K206, G302, E333, and 359-362 (GGDS).

This sequence belongs to the phosphoglycerate kinase family. In terms of assembly, monomer.

It is found in the cytoplasm. It carries out the reaction (2R)-3-phosphoglycerate + ATP = (2R)-3-phospho-glyceroyl phosphate + ADP. Its pathway is carbohydrate degradation; glycolysis; pyruvate from D-glyceraldehyde 3-phosphate: step 2/5. The polypeptide is Phosphoglycerate kinase (Clavibacter sepedonicus (Clavibacter michiganensis subsp. sepedonicus)).